Reading from the N-terminus, the 326-residue chain is tRNA uridine(34) hydroxylase (326 aa).

A Rhodanese domain is found at 123 to 217 (ADPEVFVVDT…YLEEVPEEES (95 aa)). C177 acts as the Cysteine persulfide intermediate in catalysis. The tract at residues 293–326 (AVRGEQHVGGESAKQRQQRRAEKLAKKDVQRKQA) is disordered. Residues 311-326 (RRAEKLAKKDVQRKQA) show a composition bias toward basic and acidic residues.

This sequence belongs to the TrhO family.

It catalyses the reaction uridine(34) in tRNA + AH2 + O2 = 5-hydroxyuridine(34) in tRNA + A + H2O. In terms of biological role, catalyzes oxygen-dependent 5-hydroxyuridine (ho5U) modification at position 34 in tRNAs. This Vibrio campbellii (strain ATCC BAA-1116) protein is tRNA uridine(34) hydroxylase.